Reading from the N-terminus, the 138-residue chain is MQQPARTKYRKQQKGRNKGIATRGAKVSFGEYGLKAVGRGRLTARQIEAARRAMTRHIKRGGRIWIRIFPDKPISHKPAEVRMGNGKGNPEYFVAEIQPGKVLYEMDGVDEVLARQAFRLAAAKLPILTTFVVRQVGG.

The disordered stretch occupies residues 1 to 22 (MQQPARTKYRKQQKGRNKGIAT). Residues 7 to 17 (TKYRKQQKGRN) show a composition bias toward basic residues.

This sequence belongs to the universal ribosomal protein uL16 family. As to quaternary structure, part of the 50S ribosomal subunit.

Binds 23S rRNA and is also seen to make contacts with the A and possibly P site tRNAs. In Nitrosospira multiformis (strain ATCC 25196 / NCIMB 11849 / C 71), this protein is Large ribosomal subunit protein uL16.